Reading from the N-terminus, the 199-residue chain is 3-isopropylmalate dehydratase small subunit (199 aa).

It belongs to the LeuD family. LeuD type 1 subfamily. Heterodimer of LeuC and LeuD.

The enzyme catalyses (2R,3S)-3-isopropylmalate = (2S)-2-isopropylmalate. Its pathway is amino-acid biosynthesis; L-leucine biosynthesis; L-leucine from 3-methyl-2-oxobutanoate: step 2/4. Its function is as follows. Catalyzes the isomerization between 2-isopropylmalate and 3-isopropylmalate, via the formation of 2-isopropylmaleate. The chain is 3-isopropylmalate dehydratase small subunit from Bacillus pumilus (strain SAFR-032).